Consider the following 503-residue polypeptide: Aromatase (503 aa).

2 consecutive transmembrane segments (helical) span residues 19–39 (EVMP…FFVW) and 51–71 (GYCM…MGLG). Residues 294–324 (ENVNQCILEMMIAAPDTLSVTVFFMLCLIAQ) form a substrate-binding pocket region. 2 residues coordinate substrate: D309 and M374. Position 437 (C437) interacts with heme.

It belongs to the cytochrome P450 family. Requires heme as cofactor. In terms of tissue distribution, expressed in placenta. Highly expressed in follicles (0 hour:hCG), followed by a drop (12-24 hour:hCG) and by an increase (30-39 hour:hCG). Highly expressed in corpora lutea. Also expressed in granulosa cell layer. Not expressed in theca interna.

It localises to the endoplasmic reticulum membrane. Its subcellular location is the microsome membrane. It carries out the reaction testosterone + 3 reduced [NADPH--hemoprotein reductase] + 3 O2 = 17beta-estradiol + formate + 3 oxidized [NADPH--hemoprotein reductase] + 4 H2O + 4 H(+). The enzyme catalyses androst-4-ene-3,17-dione + 3 reduced [NADPH--hemoprotein reductase] + 3 O2 = estrone + formate + 3 oxidized [NADPH--hemoprotein reductase] + 4 H2O + 4 H(+). The catalysed reaction is androst-4-ene-3,17-dione + reduced [NADPH--hemoprotein reductase] + O2 = 19-hydroxyandrost-4-ene-3,17-dione + oxidized [NADPH--hemoprotein reductase] + H2O + H(+). It catalyses the reaction 19-hydroxyandrost-4-ene-3,17-dione + reduced [NADPH--hemoprotein reductase] + O2 = 19-oxo-androst-4-ene-3,17-dione + oxidized [NADPH--hemoprotein reductase] + 2 H2O + H(+). It carries out the reaction 19-oxo-androst-4-ene-3,17-dione + reduced [NADPH--hemoprotein reductase] + O2 = estrone + formate + oxidized [NADPH--hemoprotein reductase] + H2O + 2 H(+). The enzyme catalyses estrone + reduced [NADPH--hemoprotein reductase] + O2 = 2-hydroxyestrone + oxidized [NADPH--hemoprotein reductase] + H2O + H(+). The catalysed reaction is 17beta-hydroxy-5alpha-androstan-3-one + reduced [NADPH--hemoprotein reductase] + O2 = 17beta,19-dihydroxy-3-oxo-5alpha-androstanone + oxidized [NADPH--hemoprotein reductase] + H2O + H(+). It catalyses the reaction 17beta,19-dihydroxy-3-oxo-5alpha-androstanone + reduced [NADPH--hemoprotein reductase] + O2 = 17beta-hydroxy-3,19-dioxo-5alpha-androstanone + oxidized [NADPH--hemoprotein reductase] + 2 H2O + H(+). It carries out the reaction 17beta-hydroxy-3,19-dioxo-5alpha-androstanone + reduced [NADPH--hemoprotein reductase] + O2 = 17beta-hydroxy-3-oxo-19-nor-5alpha-androst-1-ene + formate + oxidized [NADPH--hemoprotein reductase] + H2O + 2 H(+). Its pathway is steroid hormone biosynthesis. Functionally, a cytochrome P450 monooxygenase that catalyzes the conversion of C19 androgens, androst-4-ene-3,17-dione (androstenedione) and testosterone to the C18 estrogens, estrone and estradiol, respectively. Catalyzes three successive oxidations of C19 androgens: two conventional oxidations at C19 yielding 19-hydroxy and 19-oxo/19-aldehyde derivatives, followed by a third oxidative aromatization step that involves C1-beta hydrogen abstraction combined with cleavage of the C10-C19 bond to yield a phenolic A ring and formic acid. Alternatively, the third oxidative reaction yields a 19-norsteroid and formic acid. Converts dihydrotestosterone to delta1,10-dehydro 19-nordihydrotestosterone and may play a role in homeostasis of this potent androgen. Also displays 2-hydroxylase activity toward estrone. Mechanistically, uses molecular oxygen inserting one oxygen atom into a substrate, and reducing the second into a water molecule, with two electrons provided by NADPH via cytochrome P450 reductase (CPR; NADPH-ferrihemoprotein reductase). In Equus caballus (Horse), this protein is Aromatase (CYP19A1).